A 1403-amino-acid chain; its full sequence is Envelopment polyprotein (1403 aa).

A signal peptide spans 1-17 (MLLNIVLISNLACLAFA). Over 18 to 209 (LPLKEGTRGS…ELMIESFCTN (192 aa)) the chain is Lumenal. A glycan (N-linked (GlcNAc...) asparagine; by host) is linked at Asn-40. A helical membrane pass occupies residues 210–230 (LELILLVTFILVGSVMMMILT). Topologically, residues 231–314 (KTYIVYVFIP…PKTRKLCKSK (84 aa)) are cytoplasmic. Residues 315–335 (ISNIVLCVITSLIFFSFITPI) form a helical membrane-spanning segment. Residues 336–361 (SSQCIDIEKLPDEYITCKRELANIKS) are Lumenal-facing. Residues 362–382 (LTIDDTYSFIYSCTCIIVLIL) traverse the membrane as a helical segment. Topologically, residues 383 to 448 (LKKAAKYILY…FKFESSYNRT (66 aa)) are cytoplasmic. The chain crosses the membrane as a helical span at residues 449 to 469 (GLIIFMLLLVPTIVMTQETSI). The Lumenal portion of the chain corresponds to 470–1361 (NCKNIQSTQL…GNLSFYWRLT (892 aa)). An intrachain disulfide couples Cys-471 to Cys-487. N-linked (GlcNAc...) asparagine; by host glycosylation occurs at Asn-493. Intrachain disulfides connect Cys-523–Cys-550, Cys-580–Cys-589, and Cys-591–Cys-598. Asn-686 and Asn-1353 each carry an N-linked (GlcNAc...) asparagine; by host glycan. The helical transmembrane segment at 1362–1382 (IYIIISLIMLILFLYILIPLC) threads the bilayer. At 1383–1403 (KRLKGLLEYNERIYQMENKFK) the chain is on the cytoplasmic side.

It belongs to the nairovirus envelope glycoprotein family. In terms of assembly, heterodimer with glycoprotein C; in prefusion state. Heterodimer with glycoprotein N; in prefusion state. Homotrimeric; in postfusion state. Post-translationally, specific enzymatic cleavage by host MBTPS1/S1P/SKI-1 endopeptidase yield glycoprotein N. Specific enzymatic cleavages by host furin-like protease and MBTPS1/S1P endopeptidase yield GP38. In terms of processing, glycosylated.

It localises to the host endoplasmic reticulum membrane. It is found in the virion membrane. Its subcellular location is the host Golgi apparatus membrane. Functionally, glycoprotein C and glycoprotein N interact with each other and are present at the surface of the virion. Glycoprotein N probably locks the Gn-Gc complex in a prefusion state. Glycoprotein N and glycoprotein C are able to attach the virion to host cell receptors. This attachment induces virion internalization predominantly through clathrin-dependent endocytosis. In terms of biological role, glycoprotein C and glycoprotein N interact with each other and are present at the surface of the virion. The spikes at the surface of the virion are formed by an N-terminal extension of glycoprotein C. Glycoprotein N and glycoprotein C are able to attach the virion to host cell receptors. This attachment induces virion internalization predominantly through clathrin-dependent endocytosis. Class II fusion protein that promotes fusion of viral membrane with host endosomal membrane after endocytosis of the virion. Exposure to potassium is necessary for the conformational change leading to fusion. The protein is Envelopment polyprotein (GP) of Bos taurus (Bovine).